Consider the following 184-residue polypeptide: MSWRSERIWIELIMGSRKTSNFCWAFILFLGSLGFLLVGTSSYIGRNLISLFPSQQIIFFPQGIVMSFYGIAGLFISSYLWCTISWNVGGGYDRFDRKEGRVCIFRWGFPGINRRIFLRFLMRDIQSIRIEVKEGLYPRRVLYMEVRGQGAIPLTRTDENFTPREIEQKAAELAYFLRVPIEVF.

Helical transmembrane passes span 24–44 (WAFI…SSYI) and 57–77 (IIFF…LFIS).

It belongs to the Ycf4 family.

It is found in the plastid. The protein localises to the chloroplast thylakoid membrane. Its function is as follows. Seems to be required for the assembly of the photosystem I complex. The chain is Photosystem I assembly protein Ycf4 from Buxus microphylla (Littleleaf boxwood).